We begin with the raw amino-acid sequence, 475 residues long: NADH-quinone oxidoreductase subunit N 1 (475 aa).

Transmembrane regions (helical) follow at residues 8-28 (VMPL…EAAT), 36-56 (LFAI…PSEP), 67-87 (GGFF…ITLI), 100-120 (GEYY…SAAA), 122-142 (LTIL…LAGI), 157-177 (FLLG…IYGA), 199-219 (FLSG…AVPF), 244-264 (AAAL…LETF), 268-288 (PTAI…AALI), 295-315 (MFAY…ATGT), 322-342 (VLYY…IIIL), 366-386 (AFLM…GGFI), 403-423 (LAVA…RVVI), and 443-463 (ATIA…SLLI).

The protein belongs to the complex I subunit 2 family. NDH-1 is composed of 14 different subunits. Subunits NuoA, H, J, K, L, M, N constitute the membrane sector of the complex.

Its subcellular location is the cell inner membrane. The enzyme catalyses a quinone + NADH + 5 H(+)(in) = a quinol + NAD(+) + 4 H(+)(out). Functionally, NDH-1 shuttles electrons from NADH, via FMN and iron-sulfur (Fe-S) centers, to quinones in the respiratory chain. The immediate electron acceptor for the enzyme in this species is believed to be a menaquinone. Couples the redox reaction to proton translocation (for every two electrons transferred, four hydrogen ions are translocated across the cytoplasmic membrane), and thus conserves the redox energy in a proton gradient. The protein is NADH-quinone oxidoreductase subunit N 1 of Chloroherpeton thalassium (strain ATCC 35110 / GB-78).